Consider the following 324-residue polypeptide: Acetaldehyde dehydrogenase 1 (324 aa).

Position 18–21 (18–21 (SGNI)) interacts with NAD(+). Cysteine 136 serves as the catalytic Acyl-thioester intermediate. NAD(+) contacts are provided by residues 167-175 (SAGPGTRAN) and asparagine 297.

The protein belongs to the acetaldehyde dehydrogenase family.

The enzyme catalyses acetaldehyde + NAD(+) + CoA = acetyl-CoA + NADH + H(+). This chain is Acetaldehyde dehydrogenase 1, found in Parafrankia sp. (strain EAN1pec).